We begin with the raw amino-acid sequence, 165 residues long: Endoribonuclease YbeY (165 aa).

Zn(2+) is bound by residues H130, H134, and H140.

The protein belongs to the endoribonuclease YbeY family. Zn(2+) is required as a cofactor.

The protein resides in the cytoplasm. Single strand-specific metallo-endoribonuclease involved in late-stage 70S ribosome quality control and in maturation of the 3' terminus of the 16S rRNA. The polypeptide is Endoribonuclease YbeY (Streptococcus pyogenes serotype M1).